The primary structure comprises 485 residues: Glutamate--tRNA ligase 2 (485 aa).

The 'HIGH' region motif lies at Pro10–Asn20. Positions Lys252–Arg256 match the 'KMSKS' region motif. Lys255 lines the ATP pocket.

It belongs to the class-I aminoacyl-tRNA synthetase family. Glutamate--tRNA ligase type 1 subfamily. In terms of assembly, monomer.

Its subcellular location is the cytoplasm. It carries out the reaction tRNA(Glu) + L-glutamate + ATP = L-glutamyl-tRNA(Glu) + AMP + diphosphate. Its function is as follows. Catalyzes the attachment of glutamate to tRNA(Glu) in a two-step reaction: glutamate is first activated by ATP to form Glu-AMP and then transferred to the acceptor end of tRNA(Glu). The sequence is that of Glutamate--tRNA ligase 2 from Caldanaerobacter subterraneus subsp. tengcongensis (strain DSM 15242 / JCM 11007 / NBRC 100824 / MB4) (Thermoanaerobacter tengcongensis).